The sequence spans 263 residues: RNA exonuclease 4 (263 aa).

Residues 1–27 (MRLSSNWSKLQDGVTKKAGKKRIDKKP) are disordered. The span at 17–27 (KAGKKRIDKKP) shows a compositional bias: basic residues. The 153-residue stretch at 95–247 (YIAMDCEFVG…EDARATMLIY (153 aa)) folds into the Exonuclease domain.

The protein belongs to the REXO4 family.

The protein resides in the nucleus. Functionally, exoribonuclease involved in ribosome biosynthesis. Involved in the processing of ITS1, the internal transcribed spacer localized between the 18S and 5.8S rRNAs. This Candida glabrata (strain ATCC 2001 / BCRC 20586 / JCM 3761 / NBRC 0622 / NRRL Y-65 / CBS 138) (Yeast) protein is RNA exonuclease 4 (REX4).